Reading from the N-terminus, the 336-residue chain is Calcium uniporter regulatory subunit MCUb, mitochondrial (336 aa).

A mitochondrion-targeting transit peptide spans 1-35 (MLQRGLWPWRTRLLPTPGTWRPARPWPLPPPPQVL). A coiled-coil region spans residues 179-210 (ESQKKREHHLLEKIDHLKEQLQPLEQVKAGIE). Helical transmembrane passes span 220-240 (LLWAGLALLSIQGGALAWLTW) and 250-270 (PVTYFITFANSMVFFAYFIVT). A coiled-coil region spans residues 297–323 (FDVQQYNKLKEDLAKAKESLKQARHSL).

It belongs to the MCU (TC 1.A.77) family. Homooligomer. Associates with the uniplex complex, composed of MCU, MICU1, MICU2 and EMRE/SMDT1, inhibiting its activity.

It localises to the mitochondrion inner membrane. In terms of biological role, negative regulator of the mitochondrial calcium uniporter (MCU), a channel that mediates calcium uptake into the mitochondrial matrix. MCUB is required to limit mitochondrial calcium overload during stress. Acts as a dominant-negative regulator that displaces MCU from the functional uniplex complex and thereby decreases the association of calcium sensors MICU1 and MICU2, preventing channel gating. Mitochondrial calcium homeostasis plays key roles in mitochondrial metabolism. Acts as an important regulator of mitochondrial metabolism in response to stress in muscle cells: induced in response to fasting, leading to restrict mitochondrial calcium uptake, resulting in reprogramming of mitochondria toward fatty acid oxidation preference. Acts as a regulator of macrophage polarization during skeletal muscle regeneration: inhibition of mitochondrial calcium uptake drives differentiation of macrophages with anti-inflammatory profile, promoting the differentiation and fusion of satellite cells. The chain is Calcium uniporter regulatory subunit MCUb, mitochondrial from Homo sapiens (Human).